Reading from the N-terminus, the 338-residue chain is Glyceraldehyde-3-phosphate dehydrogenase (338 aa).

NAD(+) is bound by residues 13 to 14, D35, and R80; that span reads RI. Residues 151–153, T182, 211–212, and R234 contribute to the D-glyceraldehyde 3-phosphate site; these read SCT and TG. The active-site Nucleophile is the C152. Residue N316 participates in NAD(+) binding.

The protein belongs to the glyceraldehyde-3-phosphate dehydrogenase family. As to quaternary structure, homotetramer.

It localises to the cytoplasm. It carries out the reaction D-glyceraldehyde 3-phosphate + phosphate + NAD(+) = (2R)-3-phospho-glyceroyl phosphate + NADH + H(+). Its pathway is carbohydrate degradation; glycolysis; pyruvate from D-glyceraldehyde 3-phosphate: step 1/5. This is Glyceraldehyde-3-phosphate dehydrogenase (GPD) from Sclerotinia sclerotiorum (White mold).